Reading from the N-terminus, the 317-residue chain is DNA-directed RNA polymerase III subunit RPC6 (317 aa).

This sequence belongs to the eukaryotic RPC34/RPC39 RNA polymerase subunit family. Component of the RNA polymerase III (Pol III) complex consisting of 17 subunits. Interacts with BRF1/TDS4.

The protein localises to the nucleus. Its function is as follows. DNA-dependent RNA polymerase catalyzes the transcription of DNA into RNA using the four ribonucleoside triphosphates as substrates. Specific peripheric component of RNA polymerase III which synthesizes small RNAs, such as 5S rRNA and tRNAs. Involved in recruitment of Pol III to the preinitiation complex. Involved in the configuration of an initiation-competent form of RNA polymerase. This chain is DNA-directed RNA polymerase III subunit RPC6 (RPC34), found in Saccharomyces cerevisiae (strain ATCC 204508 / S288c) (Baker's yeast).